The chain runs to 249 residues: tRNA pseudouridine synthase A (249 aa).

D53 acts as the Nucleophile in catalysis. Residue Y111 coordinates substrate.

This sequence belongs to the tRNA pseudouridine synthase TruA family. Homodimer.

The catalysed reaction is uridine(38/39/40) in tRNA = pseudouridine(38/39/40) in tRNA. Functionally, formation of pseudouridine at positions 38, 39 and 40 in the anticodon stem and loop of transfer RNAs. The protein is tRNA pseudouridine synthase A of Streptococcus sanguinis (strain SK36).